Reading from the N-terminus, the 320-residue chain is Malate dehydrogenase (320 aa).

Residues 10–15 and Asp-34 contribute to the NAD(+) site; that span reads GAGMIG. 2 residues coordinate substrate: Arg-83 and Arg-89. NAD(+) is bound by residues Asn-96 and 119-121; that span reads ITN. Residues Asn-121 and Arg-152 each contribute to the substrate site. Residue His-176 is the Proton acceptor of the active site.

It belongs to the LDH/MDH superfamily. MDH type 3 family.

The enzyme catalyses (S)-malate + NAD(+) = oxaloacetate + NADH + H(+). In terms of biological role, catalyzes the reversible oxidation of malate to oxaloacetate. This Caulobacter sp. (strain K31) protein is Malate dehydrogenase.